The primary structure comprises 305 residues: tRNA-cytidine(32) 2-sulfurtransferase (305 aa).

Positions 1-20 are disordered; that stretch reads MTAVLPLPHPLADPAPRDPR. The short motif at 59–64 is the PP-loop motif element; that stretch reads SGGKDS. [4Fe-4S] cluster-binding residues include Cys134, Cys137, and Cys225. A compositionally biased stretch (low complexity) spans 282–293; the sequence is DAPPDLAPDPGA. The interval 282–305 is disordered; sequence DAPPDLAPDPGAWLTASDATHDSD.

Belongs to the TtcA family. In terms of assembly, homodimer. Mg(2+) serves as cofactor. Requires [4Fe-4S] cluster as cofactor.

It is found in the cytoplasm. It carries out the reaction cytidine(32) in tRNA + S-sulfanyl-L-cysteinyl-[cysteine desulfurase] + AH2 + ATP = 2-thiocytidine(32) in tRNA + L-cysteinyl-[cysteine desulfurase] + A + AMP + diphosphate + H(+). The protein operates within tRNA modification. Catalyzes the ATP-dependent 2-thiolation of cytidine in position 32 of tRNA, to form 2-thiocytidine (s(2)C32). The sulfur atoms are provided by the cysteine/cysteine desulfurase (IscS) system. This is tRNA-cytidine(32) 2-sulfurtransferase from Xanthomonas oryzae pv. oryzae (strain PXO99A).